Consider the following 90-residue polypeptide: Small ribosomal subunit protein uS15c (90 aa).

This sequence belongs to the universal ribosomal protein uS15 family. As to quaternary structure, part of the 30S ribosomal subunit.

Its subcellular location is the plastid. It localises to the chloroplast. The chain is Small ribosomal subunit protein uS15c (rps15) from Piper cenocladum (Ant piper).